The chain runs to 657 residues: Histidine ammonia-lyase (657 aa).

Residues 253 to 255 (ASG) constitute a cross-link (5-imidazolinone (Ala-Gly)). Residue Ser-254 is modified to 2,3-didehydroalanine (Ser). Thr-396 is subject to Phosphothreonine. A Phosphoserine modification is found at Ser-635. A Phosphothreonine modification is found at Thr-637. Ser-648 carries the phosphoserine modification.

The protein belongs to the PAL/histidase family. In terms of processing, contains an active site 4-methylidene-imidazol-5-one (MIO), which is formed autocatalytically by cyclization and dehydration of residues Ala-Ser-Gly. In terms of tissue distribution, liver and skin.

It carries out the reaction L-histidine = trans-urocanate + NH4(+). It participates in amino-acid degradation; L-histidine degradation into L-glutamate; N-formimidoyl-L-glutamate from L-histidine: step 1/3. This Rattus norvegicus (Rat) protein is Histidine ammonia-lyase (Hal).